A 144-amino-acid chain; its full sequence is Gas vesicle protein I1 (144 aa).

Positions 1–144 are disordered; that stretch reads MSDKQQQKHK…SPTEDEVNDE (144 aa). 2 stretches are compositionally biased toward basic residues: residues 7–17 and 26–46; these read QKHKQKARQAR and KARRNLLRQREKLARRRTRNR. Over residues 75–94 the composition is skewed to polar residues; the sequence is MPPQKSNAENAVRNSHSTVP. The span at 122–136 shows a compositional bias: low complexity; sequence SEASAPSDESASGSP.

The protein belongs to the gas vesicle GvpI family. In terms of assembly, gvpF to GvpM interact with each other in vitro, and may form multi-subunit complex(es). Interacts with GvpC1 and GvpO.

Its subcellular location is the gas vesicle. Proteins GvpF to GvpM might be involved in nucleating gas vesicle formation. A minor component of the gas vesicle. Gas vesicles are hollow, gas filled proteinaceous nanostructures found in several microbial planktonic microorganisms. They allow positioning of halobacteria at the optimal depth for growth in the poorly aerated, shallow brine pools of their habitat. Functionally, expression of a 9.5 kb p-vac DNA fragment containing 2 divergently transcribed regions (gvpD-gvpE-gvpF-gvpG-gvpH-gvpI-gvpJ-gvpK-gvpL-gvpM and gvpA-gvpC-gvpN-gvpO) allows H.volcanii to produce gas vesicles. A similar region restores gas vesicle production in H.halobium without the p-vac locus, but it still has the c-vac locus. The chain is Gas vesicle protein I1 (gvpI11) from Halobacterium salinarum (strain ATCC 700922 / JCM 11081 / NRC-1) (Halobacterium halobium).